A 402-amino-acid polypeptide reads, in one-letter code: Cholinephosphotransferase 1 (402 aa).

Residues 1–62 (MGLAEGLAAR…LVEKVPLWLA (62 aa)) are Cytoplasmic-facing. Residues 63–83 (PNTITMVGLLLNVLSTLILVC) traverse the membrane as a helical segment. Asparagine 64 serves as a coordination point for CDP-choline. At 84–93 (YCPTATEGAP) the chain is on the lumenal side. The chain crosses the membrane as a helical span at residues 94 to 118 (FWTYLLCAIGLFVYQSLDAIDGKQA). Mg(2+)-binding residues include aspartate 111 and aspartate 114. Residue arginine 119 coordinates CDP-choline. The Cytoplasmic portion of the chain corresponds to 119 to 125 (RRTNSSS). A helical membrane pass occupies residues 126–150 (PLGEMFDHGCDSISIVFVNLGTIAA). Aspartate 132 serves as a coordination point for Mg(2+). Residue histidine 133 is the Proton acceptor of the active site. Residue aspartate 136 participates in Mg(2+) binding. Topologically, residues 151 to 160 (VRLGTLPGWM) are lumenal. Residues 161-179 (FYCCFVGMFMFYCAQWQTY) traverse the membrane as a helical segment. Topologically, residues 180-190 (VCGTLKFGIID) are cytoplasmic. Residues 191-207 (VTELQISVTVMFLMTAV) form a helical membrane-spanning segment. The Lumenal portion of the chain corresponds to 208–222 (CGPELWDYEIPFTGL). The helical transmembrane segment at 223–248 (PMKTIPLLGIIGGTVYSCSNYFRVIL) threads the bilayer. Topologically, residues 249-265 (SGGVGKNGSTVAGTSVL) are cytoplasmic. Residues 266-281 (SPGLHIGLVLLLALMI) form a helical membrane-spanning segment. Topologically, residues 282-293 (YKKSTTNLFLQN) are lumenal. A helical membrane pass occupies residues 294 to 316 (PCLYTLAFGFVSAKITIKLVIAH). Topologically, residues 317 to 329 (MTKSEISLQDTAF) are cytoplasmic. Residues 330–339 (IGPGLLFFNQ) form a helical membrane-spanning segment. Topologically, residues 340–346 (YFNSFID) are lumenal. A helical membrane pass occupies residues 347–376 (EYIVLWIAMVISFADLLRYCISVCLQIATH). Topologically, residues 377-402 (LRISVFRISSNQAAEQVQTQKQKLTD) are cytoplasmic.

The protein belongs to the CDP-alcohol phosphatidyltransferase class-I family. Homodimer. The cofactor is Mg(2+). It depends on Mn(2+) as a cofactor.

The protein localises to the golgi apparatus membrane. It carries out the reaction CDP-choline + a 1,2-diacyl-sn-glycerol = a 1,2-diacyl-sn-glycero-3-phosphocholine + CMP + H(+). The enzyme catalyses 1,2-dioctanoyl-sn-glycerol + CDP-choline = 1,2-dioctanoyl-sn-glycero-3-phosphocholine + CMP + H(+). The catalysed reaction is 1-octadecanoyl-2-(5Z,8Z,11Z,14Z-eicosatetraenoyl)-sn-glycerol + CDP-choline = 1-octadecanoyl-2-(5Z,8Z,11Z,14Z-eicosatetraenoyl)-sn-glycero-3-phosphocholine + CMP + H(+). It catalyses the reaction 1-hexadecanoyl-2-(9Z-octadecenoyl)-sn-glycerol + CDP-choline = 1-hexadecanoyl-2-(9Z-octadecenoyl)-sn-glycero-3-phosphocholine + CMP + H(+). It carries out the reaction 1-hexadecanoyl-2-(4Z,7Z,10Z,13Z,16Z,19Z-docosahexaenoyl)-sn-glycerol + CDP-choline = 1-hexadecanoyl-2-(4Z,7Z,10Z,13Z,16Z,19Z-docosahexaenoyl)-sn-glycero-3-phosphocholine + CMP + H(+). It functions in the pathway phospholipid metabolism; phosphatidylcholine biosynthesis; phosphatidylcholine from phosphocholine: step 2/2. In terms of biological role, catalyzes the final step of de novo phosphatidylcholine (PC) synthesis, i.e. the transfer of choline phosphate from CDP-choline to the free hydroxyl of a diacylglycerol (DAG), producing a PC. It thereby plays a central role in the formation and maintenance of vesicular membranes. Shows a high preference for CDP-choline over CDP-ethanolamine as substrate. The polypeptide is Cholinephosphotransferase 1 (chpt1) (Xenopus laevis (African clawed frog)).